Here is a 103-residue protein sequence, read N- to C-terminus: ATP-dependent Clp protease adapter protein ClpS (103 aa).

This sequence belongs to the ClpS family. As to quaternary structure, binds to the N-terminal domain of the chaperone ClpA.

Functionally, involved in the modulation of the specificity of the ClpAP-mediated ATP-dependent protein degradation. The polypeptide is ATP-dependent Clp protease adapter protein ClpS (Nitrosomonas eutropha (strain DSM 101675 / C91 / Nm57)).